The following is a 223-amino-acid chain: MVLKHSVTYNLSFFISFTFSSIFFSSLILFLVYKSVLSKLFFIKYLMLNLTKVGLRRFWSQSPRRNAPKKELSSLLESTITPKAFSKRTEEPNPIMQGTDTIPMPFYLHAKCLKNNTHITLCSPERKIIFRASGGTCGFRKGKRRGYDAAYTICSKVLEQIQVKRLGIENLHVIFHGFSQAREAVQNCLLGQEGAVIRDKIVKVMDRTPIKFGGPRGRRERRI.

Residues 1–38 constitute a mitochondrion transit peptide; sequence MVLKHSVTYNLSFFISFTFSSIFFSSLILFLVYKSVLS.

The protein belongs to the universal ribosomal protein uS11 family. In terms of assembly, component of the mitochondrial small ribosomal subunit (mt-SSU). Mature yeast 74S mitochondrial ribosomes consist of a small (37S) and a large (54S) subunit. The 37S small subunit contains a 15S ribosomal RNA (15S mt-rRNA) and at least 32 different proteins. The 54S large subunit contains a 21S rRNA (21S mt-rRNA) and at least 45 different proteins.

Its subcellular location is the mitochondrion. In terms of biological role, component of the mitochondrial ribosome (mitoribosome), a dedicated translation machinery responsible for the synthesis of mitochondrial genome-encoded proteins, including at least some of the essential transmembrane subunits of the mitochondrial respiratory chain. The mitoribosomes are attached to the mitochondrial inner membrane and translation products are cotranslationally integrated into the membrane. This chain is Small ribosomal subunit protein uS11m (mrps18), found in Schizosaccharomyces pombe (strain 972 / ATCC 24843) (Fission yeast).